The sequence spans 615 residues: Elongation factor 4 (615 aa).

Positions 14 to 200 (QQIRNFCIIA…KVAELIPAPT (187 aa)) constitute a tr-type G domain. Residues 26–31 (DHGKST) and 147–150 (NKID) contribute to the GTP site.

The protein belongs to the TRAFAC class translation factor GTPase superfamily. Classic translation factor GTPase family. LepA subfamily.

The protein resides in the cell membrane. It carries out the reaction GTP + H2O = GDP + phosphate + H(+). Required for accurate and efficient protein synthesis under certain stress conditions. May act as a fidelity factor of the translation reaction, by catalyzing a one-codon backward translocation of tRNAs on improperly translocated ribosomes. Back-translocation proceeds from a post-translocation (POST) complex to a pre-translocation (PRE) complex, thus giving elongation factor G a second chance to translocate the tRNAs correctly. Binds to ribosomes in a GTP-dependent manner. The protein is Elongation factor 4 of Corynebacterium diphtheriae (strain ATCC 700971 / NCTC 13129 / Biotype gravis).